The primary structure comprises 368 residues: F-box only protein 28 (368 aa).

The segment covering 1 to 11 (MAAAAEERMAE) has biased composition (basic and acidic residues). The interval 1–56 (MAAAAEERMAEEGGGGQGDGGSSLASGSTQRQPPPPAPQHPQPGSQALPAPALAPD) is disordered. Positions 12–21 (EGGGGQGDGG) are enriched in gly residues. Positions 22–31 (SSLASGSTQR) are enriched in low complexity. The span at 32–41 (QPPPPAPQHP) shows a compositional bias: pro residues. Over residues 42–56 (QPGSQALPAPALAPD) the composition is skewed to low complexity. The region spanning 61–109 (NNTLVALPIVAIENILSFMSYDEISQLRLVCKRMDLVCQRMLNQGFLKV) is the F-box domain. Phosphoserine is present on residues S235 and S242. Phosphothreonine is present on T270. Positions 328–368 (MESAVGNSSGSGQNEESPRKRKKATEAIDSLRKSKRLRNRK) are disordered. The segment covering 333–342 (GNSSGSGQNE) has biased composition (low complexity). Position 344 is a phosphoserine (S344).

As to quaternary structure, part of a SCF (SKP1-cullin-F-box) protein ligase complex.

The protein resides in the chromosome. The protein localises to the centromere. It localises to the kinetochore. Its function is as follows. Probably recognizes and binds to some phosphorylated proteins and promotes their ubiquitination and degradation. In Homo sapiens (Human), this protein is F-box only protein 28 (FBXO28).